A 122-amino-acid polypeptide reads, in one-letter code: Large ribosomal subunit protein uL14 (122 aa).

Belongs to the universal ribosomal protein uL14 family. Part of the 50S ribosomal subunit. Forms a cluster with proteins L3 and L19. In the 70S ribosome, L14 and L19 interact and together make contacts with the 16S rRNA in bridges B5 and B8.

In terms of biological role, binds to 23S rRNA. Forms part of two intersubunit bridges in the 70S ribosome. The polypeptide is Large ribosomal subunit protein uL14 (Nocardia farcinica (strain IFM 10152)).